Here is a 178-residue protein sequence, read N- to C-terminus: ATP-dependent protease subunit HslV (178 aa).

Thr7 is a catalytic residue. Residues Gly162, Cys165, and Thr168 each coordinate Na(+).

The protein belongs to the peptidase T1B family. HslV subfamily. A double ring-shaped homohexamer of HslV is capped on each side by a ring-shaped HslU homohexamer. The assembly of the HslU/HslV complex is dependent on binding of ATP.

The protein localises to the cytoplasm. It carries out the reaction ATP-dependent cleavage of peptide bonds with broad specificity.. With respect to regulation, allosterically activated by HslU binding. Its function is as follows. Protease subunit of a proteasome-like degradation complex believed to be a general protein degrading machinery. This is ATP-dependent protease subunit HslV from Burkholderia cenocepacia (strain ATCC BAA-245 / DSM 16553 / LMG 16656 / NCTC 13227 / J2315 / CF5610) (Burkholderia cepacia (strain J2315)).